Reading from the N-terminus, the 482-residue chain is uncharacterized protein (482 aa).

The DWNN domain maps to 5–79 (IYYKFKSQKD…STSVIVRRVP (75 aa)). The tract at residues 86 to 108 (GTAARYVSGAPKTTGARSDSVKR) is disordered. Residues 183 to 200 (YICYRCGQKGHWIQACPT) form a CCHC-type zinc finger. Residues 282–322 (CTLCKKLARNACRTPCCDKLFCEECIQTALLDSDFECPNCH) form an RING-type; degenerate zinc finger. Disordered regions lie at residues 346 to 393 (KSVL…SSAV) and 447 to 482 (QVYH…TKTN). Low complexity predominate over residues 451-466 (NNRNPPRTNSRPSNAS).

The protein localises to the nucleus. This is an uncharacterized protein from Schizosaccharomyces pombe (strain 972 / ATCC 24843) (Fission yeast).